A 297-amino-acid polypeptide reads, in one-letter code: tRNA dimethylallyltransferase (297 aa).

ATP is bound at residue 9-16; that stretch reads GPTASGKS. 11 to 16 provides a ligand contact to substrate; it reads TASGKS. 2 interaction with substrate tRNA regions span residues 34–37 and 155–159; these read DSMQ and QRVIR.

Belongs to the IPP transferase family. Monomer. Mg(2+) is required as a cofactor.

It catalyses the reaction adenosine(37) in tRNA + dimethylallyl diphosphate = N(6)-dimethylallyladenosine(37) in tRNA + diphosphate. Its function is as follows. Catalyzes the transfer of a dimethylallyl group onto the adenine at position 37 in tRNAs that read codons beginning with uridine, leading to the formation of N6-(dimethylallyl)adenosine (i(6)A). The protein is tRNA dimethylallyltransferase of Leuconostoc mesenteroides subsp. mesenteroides (strain ATCC 8293 / DSM 20343 / BCRC 11652 / CCM 1803 / JCM 6124 / NCDO 523 / NBRC 100496 / NCIMB 8023 / NCTC 12954 / NRRL B-1118 / 37Y).